The chain runs to 725 residues: Catalase-peroxidase (725 aa).

Residues Trp98 to Tyr226 constitute a cross-link (tryptophyl-tyrosyl-methioninium (Trp-Tyr) (with M-252)). The active-site Proton acceptor is His99. Residues Tyr226–Met252 constitute a cross-link (tryptophyl-tyrosyl-methioninium (Tyr-Met) (with W-98)). Residue His267 coordinates heme b.

It belongs to the peroxidase family. Peroxidase/catalase subfamily. As to quaternary structure, homodimer or homotetramer. The cofactor is heme b. In terms of processing, formation of the three residue Trp-Tyr-Met cross-link is important for the catalase, but not the peroxidase activity of the enzyme.

It carries out the reaction H2O2 + AH2 = A + 2 H2O. It catalyses the reaction 2 H2O2 = O2 + 2 H2O. Functionally, bifunctional enzyme with both catalase and broad-spectrum peroxidase activity. This chain is Catalase-peroxidase, found in Paracoccus denitrificans (strain Pd 1222).